We begin with the raw amino-acid sequence, 420 residues long: Gamma-glutamyl phosphate reductase (420 aa).

Belongs to the gamma-glutamyl phosphate reductase family.

The protein resides in the cytoplasm. The catalysed reaction is L-glutamate 5-semialdehyde + phosphate + NADP(+) = L-glutamyl 5-phosphate + NADPH + H(+). It functions in the pathway amino-acid biosynthesis; L-proline biosynthesis; L-glutamate 5-semialdehyde from L-glutamate: step 2/2. Its function is as follows. Catalyzes the NADPH-dependent reduction of L-glutamate 5-phosphate into L-glutamate 5-semialdehyde and phosphate. The product spontaneously undergoes cyclization to form 1-pyrroline-5-carboxylate. This chain is Gamma-glutamyl phosphate reductase, found in Streptococcus sanguinis (strain SK36).